The following is a 197-amino-acid chain: Ribonuclease HII (197 aa).

The region spanning 9-197 is the RNase H type-2 domain; that stretch reads ELIAGVDEVG…APVKKALEQF (189 aa). A divalent metal cation contacts are provided by Asp15, Glu16, and Asp107.

The protein belongs to the RNase HII family. The cofactor is Mn(2+). Mg(2+) is required as a cofactor.

It localises to the cytoplasm. It carries out the reaction Endonucleolytic cleavage to 5'-phosphomonoester.. Endonuclease that specifically degrades the RNA of RNA-DNA hybrids. This is Ribonuclease HII from Haemophilus influenzae (strain PittGG).